The primary structure comprises 559 residues: Serine/threonine-protein kinase VRK1 (559 aa).

One can recognise a Protein kinase domain in the interval 32–388 (YIVGKQFATG…EDDDEEEEVI (357 aa)). ATP is bound by residues 38–46 (FATGGFGRI) and K61. D167 serves as the catalytic Proton acceptor. 2 disordered regions span residues 315 to 419 (EAAQ…ATSD) and 448 to 559 (SSCE…SSEV). Polar residues-rich tracts occupy residues 405 to 418 (RSFN…TATS) and 449 to 460 (SCESQYESNEPG). Positions 533-542 (TSARYQEKRA) are enriched in basic and acidic residues. Residues 545 to 559 (NTKPTFDDSSCSSEV) show a composition bias toward polar residues.

The protein belongs to the protein kinase superfamily. CK1 Ser/Thr protein kinase family. VRK subfamily. Post-translationally, autophosphorylates in vitro.

Its subcellular location is the nucleus. The protein localises to the cytoplasm. It is found in the cajal body. The enzyme catalyses L-seryl-[protein] + ATP = O-phospho-L-seryl-[protein] + ADP + H(+). It catalyses the reaction L-threonyl-[protein] + ATP = O-phospho-L-threonyl-[protein] + ADP + H(+). Functionally, serine/threonine kinase that phosphorylates baf-1, thus regulating the association of baf-1 with chromatin and nuclear membrane proteins during nuclear envelope formation. May act through the egl-17 signaling pathway. Essential in hermaphrodites for formation of the vulva, uterus, and uterine seam cells and for development and maintenance of the somatic gonad and thus the germ line. Acts to prevent cep-1 from triggering an inappropriate cell cycle arrest, thereby promoting germ cell proliferation. Regulates anchor cell polarity and the timing of anchor cell invasion through the basement membranes separating vulval and somatic gonadal cells during the L3 larval stage. This is Serine/threonine-protein kinase VRK1 from Caenorhabditis briggsae.